A 467-amino-acid polypeptide reads, in one-letter code: UDP-N-acetylmuramate--L-alanine ligase (467 aa).

Residue 114–120 coordinates ATP; that stretch reads GTHGKTT.

It belongs to the MurCDEF family.

The protein resides in the cytoplasm. It carries out the reaction UDP-N-acetyl-alpha-D-muramate + L-alanine + ATP = UDP-N-acetyl-alpha-D-muramoyl-L-alanine + ADP + phosphate + H(+). Its pathway is cell wall biogenesis; peptidoglycan biosynthesis. Functionally, cell wall formation. The polypeptide is UDP-N-acetylmuramate--L-alanine ligase (Chlorobium chlorochromatii (strain CaD3)).